Here is a 488-residue protein sequence, read N- to C-terminus: Protein nucleotidyltransferase YdiU (488 aa).

ATP contacts are provided by Gly91, Gly93, Arg94, Lys114, Asp126, Gly127, Arg177, and Arg184. Asp253 serves as the catalytic Proton acceptor. Positions 254 and 263 each coordinate Mg(2+). Position 263 (Asp263) interacts with ATP.

Belongs to the SELO family. Mg(2+) serves as cofactor. Requires Mn(2+) as cofactor.

The catalysed reaction is L-seryl-[protein] + ATP = 3-O-(5'-adenylyl)-L-seryl-[protein] + diphosphate. It catalyses the reaction L-threonyl-[protein] + ATP = 3-O-(5'-adenylyl)-L-threonyl-[protein] + diphosphate. The enzyme catalyses L-tyrosyl-[protein] + ATP = O-(5'-adenylyl)-L-tyrosyl-[protein] + diphosphate. It carries out the reaction L-histidyl-[protein] + UTP = N(tele)-(5'-uridylyl)-L-histidyl-[protein] + diphosphate. The catalysed reaction is L-seryl-[protein] + UTP = O-(5'-uridylyl)-L-seryl-[protein] + diphosphate. It catalyses the reaction L-tyrosyl-[protein] + UTP = O-(5'-uridylyl)-L-tyrosyl-[protein] + diphosphate. In terms of biological role, nucleotidyltransferase involved in the post-translational modification of proteins. It can catalyze the addition of adenosine monophosphate (AMP) or uridine monophosphate (UMP) to a protein, resulting in modifications known as AMPylation and UMPylation. The polypeptide is Protein nucleotidyltransferase YdiU (Bacillus cereus (strain AH187)).